A 304-amino-acid polypeptide reads, in one-letter code: Aspartate carbamoyltransferase catalytic subunit (304 aa).

Carbamoyl phosphate-binding residues include arginine 55 and threonine 56. Residue lysine 83 coordinates L-aspartate. The carbamoyl phosphate site is built by arginine 105, histidine 133, and glutamine 136. L-aspartate is bound by residues arginine 166 and arginine 220. The carbamoyl phosphate site is built by glycine 261 and proline 262.

It belongs to the aspartate/ornithine carbamoyltransferase superfamily. ATCase family. In terms of assembly, heterododecamer (2C3:3R2) of six catalytic PyrB chains organized as two trimers (C3), and six regulatory PyrI chains organized as three dimers (R2).

The enzyme catalyses carbamoyl phosphate + L-aspartate = N-carbamoyl-L-aspartate + phosphate + H(+). It functions in the pathway pyrimidine metabolism; UMP biosynthesis via de novo pathway; (S)-dihydroorotate from bicarbonate: step 2/3. Its function is as follows. Catalyzes the condensation of carbamoyl phosphate and aspartate to form carbamoyl aspartate and inorganic phosphate, the committed step in the de novo pyrimidine nucleotide biosynthesis pathway. The protein is Aspartate carbamoyltransferase catalytic subunit of Caldanaerobacter subterraneus subsp. tengcongensis (strain DSM 15242 / JCM 11007 / NBRC 100824 / MB4) (Thermoanaerobacter tengcongensis).